The chain runs to 154 residues: Nuclear cap-binding protein subunit 2-A (154 aa).

MRNA-binding positions include Tyr10, Tyr33, 102-106, 113-117, and 123-124; these read RVDWD, RQYGR, and QV. The RRM domain occupies 30–108; sequence STLYVGNLSF…RLIRVDWDAG (79 aa).

It belongs to the RRM NCBP2 family. As to quaternary structure, component of the nuclear cap-binding complex (CBC), a heterodimer composed of Cbp80 and Cbp20 that interacts with m7GpppG-capped RNA. Interacts with Ars2.

Its subcellular location is the nucleus. Its function is as follows. Component of the cap-binding complex (CBC), which binds co-transcriptionally to the 5' cap of pre-mRNAs and is involved in various processes such as pre-mRNA splicing and RNA-mediated gene silencing (RNAi). The CBC complex is involved in miRNA-mediated RNA interference via its interaction with Ars2 and is required for primary microRNAs (miRNAs) processing. Also involved in innate immunity via the short interfering RNAs (siRNAs) processing machinery by restricting the viral RNA production. In the CBC complex, Cbp20 recognizes and binds capped RNAs (m7GpppG-capped RNA) but requires Cbp80 to stabilize the movement of its N-terminal loop and lock the CBC into a high affinity cap-binding state with the cap structure. This Drosophila virilis (Fruit fly) protein is Nuclear cap-binding protein subunit 2-A (Cbp20-A).